A 389-amino-acid polypeptide reads, in one-letter code: Na(+)/H(+) antiporter NhaA (389 aa).

Helical transmembrane passes span 14–34 (AGGILLLVAVVFAMLMANSPL), 59–79 (LLLWINDGLMALFFLLIGLEV), 95–115 (SLPSFAAIGGMLVPAGIYLLF), 124–144 (AGWAIPAATDIAFALGIMALL), 154–174 (VFLLALAIIDDLGVIVIIALF), 177–197 (SDLSTISLAIASVAILGLVGL), 213–233 (LILWVAVLKSGVHATLAGVII), 261–281 (FLILPVFAFANAGVALGNMSL), 290–310 (IGIALGLILGKPIGVMLFSFI), 328–348 (IAPVAAMCGIGFTMSMFIASL), and 363–383 (LGTLIGSFIAALVGYFWLSKV).

This sequence belongs to the NhaA Na(+)/H(+) (TC 2.A.33) antiporter family.

The protein resides in the cell inner membrane. The enzyme catalyses Na(+)(in) + 2 H(+)(out) = Na(+)(out) + 2 H(+)(in). Its function is as follows. Na(+)/H(+) antiporter that extrudes sodium in exchange for external protons. The sequence is that of Na(+)/H(+) antiporter NhaA from Shewanella sp. (strain W3-18-1).